The primary structure comprises 51 residues: Large ribosomal subunit protein bL33 (51 aa).

It belongs to the bacterial ribosomal protein bL33 family.

The sequence is that of Large ribosomal subunit protein bL33 from Nitrosococcus oceani (strain ATCC 19707 / BCRC 17464 / JCM 30415 / NCIMB 11848 / C-107).